A 198-amino-acid chain; its full sequence is MPKIGMEPLRRRELIDAAIRTIGQRGSLDVTVAQIAHEAGVSPALAHHYFGGKDKLILATMRHLLRELGRDLNVAIKQANTPHERIAAIIAVNFSATQFAQETIAAWLTFYVHAQQSDDIKRLLRIYARRLHSNLVFALEQLTSRARANRIAEGAGAMIDGLYIRHALGADAPDAASAIALVEDYIAIQLSGQPSAEN.

The 61-residue stretch at 8–68 (PLRRRELIDA…ATMRHLLREL (61 aa)) folds into the HTH tetR-type domain. Positions 31–50 (TVAQIAHEAGVSPALAHHYF) form a DNA-binding region, H-T-H motif.

The protein operates within amine and polyamine biosynthesis; betaine biosynthesis via choline pathway [regulation]. Functionally, repressor involved in the biosynthesis of the osmoprotectant glycine betaine. It represses transcription of the choline transporter BetT and the genes of BetAB involved in the synthesis of glycine betaine. This Brucella abortus (strain 2308) protein is HTH-type transcriptional regulator BetI.